The sequence spans 956 residues: Translation initiation factor IF-2 (956 aa).

Residues 50–351 (FPADSGGAAN…APSIGGVQVP (302 aa)) form a disordered region. Residues 64–95 (APKPARAPKPAPKAAPAPPVEEAPAEPAPPAA) are compositionally biased toward pro residues. 2 stretches are compositionally biased toward low complexity: residues 96-107 (PEVVAAPEAPVA) and 121-136 (PEAP…ARPA). Residues 146–155 (AAEKPADTRT) are compositionally biased toward basic and acidic residues. 2 stretches are compositionally biased toward gly residues: residues 171 to 192 (RPGG…GGPR) and 206 to 234 (RPGG…GQGG). Low complexity predominate over residues 235–254 (SRPSPGMMPGRSAVGRPGAP). A compositionally biased stretch (gly residues) spans 255-320 (ARGGSGGPGG…GTQGAFGRAG (66 aa)). The span at 324–333 (VRARKSRRAK) shows a compositional bias: basic residues. A tr-type G domain is found at 448-619 (ARPPVVTVMG…AVLLTADAAL (172 aa)). Residues 457–464 (GHVDHGKT) form a G1 region. 457 to 464 (GHVDHGKT) contributes to the GTP binding site. The tract at residues 482–486 (GITQH) is G2. A G3 region spans residues 507–510 (DTPG). GTP-binding positions include 507–511 (DTPGH) and 561–564 (NKVD). Residues 561 to 564 (NKVD) form a G4 region. The interval 597 to 599 (SAK) is G5.

The protein belongs to the TRAFAC class translation factor GTPase superfamily. Classic translation factor GTPase family. IF-2 subfamily.

It localises to the cytoplasm. Its function is as follows. One of the essential components for the initiation of protein synthesis. Protects formylmethionyl-tRNA from spontaneous hydrolysis and promotes its binding to the 30S ribosomal subunits. Also involved in the hydrolysis of GTP during the formation of the 70S ribosomal complex. This chain is Translation initiation factor IF-2, found in Beutenbergia cavernae (strain ATCC BAA-8 / DSM 12333 / CCUG 43141 / JCM 11478 / NBRC 16432 / NCIMB 13614 / HKI 0122).